A 240-amino-acid polypeptide reads, in one-letter code: UDP-2,3-diacylglucosamine hydrolase (240 aa).

Residues aspartate 8, histidine 10, aspartate 41, asparagine 79, and histidine 114 each contribute to the Mn(2+) site. Substrate is bound at residue 79–80 (NR). The substrate site is built by aspartate 122, serine 160, asparagine 164, lysine 167, and histidine 195. Mn(2+) contacts are provided by histidine 195 and histidine 197.

Belongs to the LpxH family. Mn(2+) serves as cofactor.

The protein localises to the cell inner membrane. It catalyses the reaction UDP-2-N,3-O-bis[(3R)-3-hydroxytetradecanoyl]-alpha-D-glucosamine + H2O = 2-N,3-O-bis[(3R)-3-hydroxytetradecanoyl]-alpha-D-glucosaminyl 1-phosphate + UMP + 2 H(+). The protein operates within glycolipid biosynthesis; lipid IV(A) biosynthesis; lipid IV(A) from (3R)-3-hydroxytetradecanoyl-[acyl-carrier-protein] and UDP-N-acetyl-alpha-D-glucosamine: step 4/6. Hydrolyzes the pyrophosphate bond of UDP-2,3-diacylglucosamine to yield 2,3-diacylglucosamine 1-phosphate (lipid X) and UMP by catalyzing the attack of water at the alpha-P atom. Involved in the biosynthesis of lipid A, a phosphorylated glycolipid that anchors the lipopolysaccharide to the outer membrane of the cell. The sequence is that of UDP-2,3-diacylglucosamine hydrolase from Salmonella arizonae (strain ATCC BAA-731 / CDC346-86 / RSK2980).